A 298-amino-acid chain; its full sequence is Beta-soluble NSF attachment protein (298 aa).

It belongs to the SNAP family. In terms of assembly, interacts with PRKCABP, and disrupts the interaction between GRIA2 and PRKCABP, leading to the internalization of GRIA2.

Its subcellular location is the membrane. In terms of biological role, required for vesicular transport between the endoplasmic reticulum and the Golgi apparatus. This is Beta-soluble NSF attachment protein (NAPB) from Homo sapiens (Human).